A 243-amino-acid chain; its full sequence is Glucosamine-6-phosphate deaminase (243 aa).

D67 acts as the Proton acceptor; for enolization step in catalysis. The For ring-opening step role is filled by N137. H139 acts as the Proton acceptor; for ring-opening step in catalysis. The For ring-opening step role is filled by E144.

This sequence belongs to the glucosamine/galactosamine-6-phosphate isomerase family. NagB subfamily.

The catalysed reaction is alpha-D-glucosamine 6-phosphate + H2O = beta-D-fructose 6-phosphate + NH4(+). The protein operates within amino-sugar metabolism; N-acetylneuraminate degradation; D-fructose 6-phosphate from N-acetylneuraminate: step 5/5. Its function is as follows. Catalyzes the reversible isomerization-deamination of glucosamine 6-phosphate (GlcN6P) to form fructose 6-phosphate (Fru6P) and ammonium ion. In Staphylococcus epidermidis (strain ATCC 12228 / FDA PCI 1200), this protein is Glucosamine-6-phosphate deaminase.